The sequence spans 502 residues: Probable cytosol aminopeptidase (502 aa).

Mn(2+) contacts are provided by lysine 270 and aspartate 275. The active site involves lysine 282. Mn(2+)-binding residues include aspartate 293, aspartate 352, and glutamate 354. Arginine 356 is a catalytic residue.

The protein belongs to the peptidase M17 family. Mn(2+) is required as a cofactor.

It is found in the cytoplasm. It catalyses the reaction Release of an N-terminal amino acid, Xaa-|-Yaa-, in which Xaa is preferably Leu, but may be other amino acids including Pro although not Arg or Lys, and Yaa may be Pro. Amino acid amides and methyl esters are also readily hydrolyzed, but rates on arylamides are exceedingly low.. The enzyme catalyses Release of an N-terminal amino acid, preferentially leucine, but not glutamic or aspartic acids.. Its function is as follows. Presumably involved in the processing and regular turnover of intracellular proteins. Catalyzes the removal of unsubstituted N-terminal amino acids from various peptides. This Desulfotalea psychrophila (strain LSv54 / DSM 12343) protein is Probable cytosol aminopeptidase.